A 227-amino-acid chain; its full sequence is MPMHSPALPMLHLMRLVSPSQPVGAFSYSRGLEWAVHAGTVTNEESCAGWVFGLLEHSYAVLDGAIFWRMISALMRNDDAEFCRLNDWLGASRESSELELEDRRMGESLRTLLSELGVERARSFASEQRATYPAAFSIAACHWNIEPVDALRGLMWSVVESQIMAAIRLVPLGHTAGQRILIAGAAKIERAVEKARTLNDDEIGNTAPALAMASAWHETQYSRLFRS.

Belongs to the UreF family. As to quaternary structure, ureD, UreF and UreG form a complex that acts as a GTP-hydrolysis-dependent molecular chaperone, activating the urease apoprotein by helping to assemble the nickel containing metallocenter of UreC. The UreE protein probably delivers the nickel.

Its subcellular location is the cytoplasm. Its function is as follows. Required for maturation of urease via the functional incorporation of the urease nickel metallocenter. The sequence is that of Urease accessory protein UreF 2 from Brucella anthropi (strain ATCC 49188 / DSM 6882 / CCUG 24695 / JCM 21032 / LMG 3331 / NBRC 15819 / NCTC 12168 / Alc 37) (Ochrobactrum anthropi).